The chain runs to 442 residues: MRGAMELEPELLLQEARENVEAAQSYRRELGHRLEGLREARRQIKESASQTRDVLKQHFNDLKGTLGKLLDERLVTLLQEVDTIEQETIKPLDDCQKLIEHGVNTAEDLVREGEIAMLGGVGEENEKLWSFTKKASHIQLDSLPEVPLLVDVPCLSAQLDDSILNIVKDHIFKHGTVASRPPVQIEELIEKPGGIIVRWCKVDDDFTAQDYRLQFRKCTSNHFEDVYVGSETEFIVLHIDPNVDYQFRVCARGDGRQEWSPWSVPQIGHSTLVPHEWTAGFEGYSLSSRRNIALRNDSESSGVLYSRAPTYFCGQTLTFRVETVGQPDRRDSIGVCAEKQDGYDSLQRDQAVCISTNGAVFVNGKEMTNQLPAVTSGSTVTFDIEAVTLGTTSNNEGGHFKLRVTISSNNREVVFDWLLDQSCGSLYFGCSFFYPGWKVLVF.

Met-1 carries the N-acetylmethionine modification. Positions 10-57 form a coiled coil; the sequence is ELLLQEARENVEAAQSYRRELGHRLEGLREARRQIKESASQTRDVLKQ. The Fibronectin type-III domain maps to 181-274; the sequence is PPVQIEELIE…PQIGHSTLVP (94 aa).

Belongs to the cytokine receptor-like factor 3 family. As to expression, expressed in several embryonic and adult tissues, including adult and fetal brain, liver, spleen and pancreas. Expressed in adult, but not fetal kidney. Expressed in skin and squamous cell carcinoma (SCC) and in several other cancer types. Also detected in lesion actinic keratosis (AK).

It is found in the cytoplasm. Functionally, may play a role in the negative regulation of cell cycle progression. This is Cytokine receptor-like factor 3 (CRLF3) from Homo sapiens (Human).